The following is a 291-amino-acid chain: Small ribosomal subunit protein uS2 (291 aa).

The disordered stretch occupies residues 256-291; that stretch reads STTAPPNWEATGGDWATSTAPAEGWAGDAPAGETKW.

It belongs to the universal ribosomal protein uS2 family. Component of the small ribosomal subunit. Mature ribosomes consist of a small (40S) and a large (60S) subunit. The 40S subunit contains about 33 different proteins and 1 molecule of RNA (18S). The 60S subunit contains about 49 different proteins and 3 molecules of RNA (25S, 5.8S and 5S). Interacts with RPS21.

The protein localises to the cytoplasm. Required for the assembly and/or stability of the 40S ribosomal subunit. Required for the processing of the 20S rRNA-precursor to mature 18S rRNA in a late step of the maturation of 40S ribosomal subunits. This Coccidioides immitis (strain RS) (Valley fever fungus) protein is Small ribosomal subunit protein uS2.